The sequence spans 368 residues: DNA replication and repair protein RecF (368 aa).

30-37 (GNNAQGKT) contacts ATP.

It belongs to the RecF family.

It localises to the cytoplasm. The RecF protein is involved in DNA metabolism; it is required for DNA replication and normal SOS inducibility. RecF binds preferentially to single-stranded, linear DNA. It also seems to bind ATP. This chain is DNA replication and repair protein RecF, found in Streptococcus pyogenes serotype M49 (strain NZ131).